We begin with the raw amino-acid sequence, 269 residues long: Formamidopyrimidine-DNA glycosylase (269 aa).

Pro-2 functions as the Schiff-base intermediate with DNA in the catalytic mechanism. The active-site Proton donor is the Glu-3. Lys-57 functions as the Proton donor; for beta-elimination activity in the catalytic mechanism. The DNA site is built by His-90, Arg-109, and Lys-150. Residues 235-269 (QVYGRKGEPCRVCGTPIVATKHAQRATFYCRHCQK) form an FPG-type zinc finger. The Proton donor; for delta-elimination activity role is filled by Arg-259.

The protein belongs to the FPG family. In terms of assembly, monomer. The cofactor is Zn(2+).

It carries out the reaction Hydrolysis of DNA containing ring-opened 7-methylguanine residues, releasing 2,6-diamino-4-hydroxy-5-(N-methyl)formamidopyrimidine.. The enzyme catalyses 2'-deoxyribonucleotide-(2'-deoxyribose 5'-phosphate)-2'-deoxyribonucleotide-DNA = a 3'-end 2'-deoxyribonucleotide-(2,3-dehydro-2,3-deoxyribose 5'-phosphate)-DNA + a 5'-end 5'-phospho-2'-deoxyribonucleoside-DNA + H(+). In terms of biological role, involved in base excision repair of DNA damaged by oxidation or by mutagenic agents. Acts as a DNA glycosylase that recognizes and removes damaged bases. Has a preference for oxidized purines, such as 7,8-dihydro-8-oxoguanine (8-oxoG). Has AP (apurinic/apyrimidinic) lyase activity and introduces nicks in the DNA strand. Cleaves the DNA backbone by beta-delta elimination to generate a single-strand break at the site of the removed base with both 3'- and 5'-phosphates. The polypeptide is Formamidopyrimidine-DNA glycosylase (Salmonella heidelberg (strain SL476)).